Consider the following 309-residue polypeptide: MQCIETNNLQQLLEQVKPYTKKGKLATYIPELGNANPDDLGIAIFHKETEYIHAGNSQTLFTLQSISKVITLALALLDRGEEYVFSKVGMEPTGDPFNSIIKLETTSPSKPLNPMINAGALAITSMLAGKDNEEKMERILHFVREITDNPTINYSSKVANSELETAYLNRSLCYYMKQNGIIDCDIEELMDLYTRQCAVEVNCIDLARIGLIFAMDGYDPYKKKQIIPKHITKICKTFMVTCGMYNESGEFAIRVGIPAKSGVAGGIFGCVKGEMGIGIFGPALDANGNSIAGFKILELLSAQEGWSIF.

The substrate site is built by Ser65, Asn117, Glu162, Asn169, Tyr193, Tyr245, and Val263.

Belongs to the glutaminase family. As to quaternary structure, homotetramer.

It catalyses the reaction L-glutamine + H2O = L-glutamate + NH4(+). The sequence is that of Glutaminase from Bacillus cereus (strain ATCC 10987 / NRS 248).